The chain runs to 414 residues: Glucose-1-phosphate adenylyltransferase (414 aa).

Alpha-D-glucose 1-phosphate contacts are provided by residues tyrosine 99, glycine 164, 181 to 182, and serine 199; that span reads EK.

The protein belongs to the bacterial/plant glucose-1-phosphate adenylyltransferase family. In terms of assembly, homotetramer.

The catalysed reaction is alpha-D-glucose 1-phosphate + ATP + H(+) = ADP-alpha-D-glucose + diphosphate. The protein operates within glycan biosynthesis; glycogen biosynthesis. In terms of biological role, involved in the biosynthesis of ADP-glucose, a building block required for the elongation reactions to produce glycogen. Catalyzes the reaction between ATP and alpha-D-glucose 1-phosphate (G1P) to produce pyrophosphate and ADP-Glc. The chain is Glucose-1-phosphate adenylyltransferase from Bifidobacterium adolescentis (strain ATCC 15703 / DSM 20083 / NCTC 11814 / E194a).